Reading from the N-terminus, the 486-residue chain is Serine/threonine-protein phosphatase 2A 56 kDa regulatory subunit alpha isoform (486 aa).

S2 bears the N-acetylserine mark. Residues 22–52 are disordered; it reads DGFTRKSVRKAQRQKRSQGSSQFRSQGSQAE. Residues 27-37 show a composition bias toward basic residues; sequence KSVRKAQRQKR. Residues 38 to 51 are compositionally biased toward low complexity; that stretch reads SQGSSQFRSQGSQA. Phosphoserine occurs at positions 41, 42, and 49.

Belongs to the phosphatase 2A regulatory subunit B56 family. In terms of assembly, PP2A consists of a common heterodimeric core enzyme, composed of a 36 kDa catalytic subunit (subunit C) and a 65 kDa constant regulatory subunit (PR65 or subunit A), that associates with a variety of regulatory subunits. Proteins that associate with the core dimer include three families of regulatory subunits B (the R2/B/PR55/B55, R3/B''/PR72/PR130/PR59 and R5/B'/B56 families), the 48 kDa variable regulatory subunit, viral proteins, and cell signaling molecules. Interacts with SGO1. As to expression, widely expressed with highest levels in thymus and ovary.

The protein resides in the cytoplasm. Its subcellular location is the nucleus. It is found in the chromosome. It localises to the centromere. Functionally, the B regulatory subunit might modulate substrate selectivity and catalytic activity, and might also direct the localization of the catalytic enzyme to a particular subcellular compartment. This Mus musculus (Mouse) protein is Serine/threonine-protein phosphatase 2A 56 kDa regulatory subunit alpha isoform (Ppp2r5a).